We begin with the raw amino-acid sequence, 258 residues long: Acetylglutamate kinase (258 aa).

Residues 44 to 45, Arg-66, and Asn-158 contribute to the substrate site; that span reads GG. ATP-binding positions include 181–186 and 209–211; these read DVSGIL and IIT.

Belongs to the acetylglutamate kinase family. ArgB subfamily. Homodimer.

Its subcellular location is the cytoplasm. The catalysed reaction is N-acetyl-L-glutamate + ATP = N-acetyl-L-glutamyl 5-phosphate + ADP. It functions in the pathway amino-acid biosynthesis; L-arginine biosynthesis; N(2)-acetyl-L-ornithine from L-glutamate: step 2/4. In terms of biological role, catalyzes the ATP-dependent phosphorylation of N-acetyl-L-glutamate. In Klebsiella pneumoniae subsp. pneumoniae (strain ATCC 700721 / MGH 78578), this protein is Acetylglutamate kinase.